The following is a 93-amino-acid chain: YcgL domain-containing protein Ssed_2518 (93 aa).

The YcgL domain maps to 1–85 (MICAVYKSRR…PKVNLLEQHK (85 aa)).

This chain is YcgL domain-containing protein Ssed_2518, found in Shewanella sediminis (strain HAW-EB3).